We begin with the raw amino-acid sequence, 191 residues long: Elongation factor P (191 aa).

The protein belongs to the elongation factor P family.

The protein localises to the cytoplasm. Its pathway is protein biosynthesis; polypeptide chain elongation. Functionally, involved in peptide bond synthesis. Stimulates efficient translation and peptide-bond synthesis on native or reconstituted 70S ribosomes in vitro. Probably functions indirectly by altering the affinity of the ribosome for aminoacyl-tRNA, thus increasing their reactivity as acceptors for peptidyl transferase. This is Elongation factor P from Bartonella tribocorum (strain CIP 105476 / IBS 506).